The primary structure comprises 205 residues: Golgi to ER traffic protein 1 (205 aa).

Residues 1–9 (MFELQPSSI) lie on the Lumenal side of the membrane. The helical transmembrane segment at 10–29 (VVLVFCVLAIKVCISLIGKT) threads the bilayer. At 30-116 (TIQDRIWYLY…QISKLVNLAI (87 aa)) the chain is on the cytoplasmic side. Residues 53-103 (ALAQKREELVRVNKERRAISAQDEYAKWTKLNRQFDKLNSEVNDLAEATSS) are a coiled coil. Residues 117 to 137 (AATTTAPIWFSRIWYRKVVLF) traverse the membrane as a helical segment. Residues 138 to 161 (YLPPKVFPYYIEWVLALPFIVTGG) are Lumenal-facing. The chain crosses the membrane as a helical span at residues 162–178 (VGLTVWMFALNSVLSSL). Residues 179–205 (EFLIKFYLEEPVKKPEAPAASEAQTKQ) are Cytoplasmic-facing.

It belongs to the WRB/GET1 family. Component of the Golgi to ER traffic (GET) complex, which is composed of GET1, GET2 and GET3. Within the complex, GET1 and GET2 form a heterotetramer which is stabilized by phosphatidylinositol binding and which binds to the GET3 homodimer.

The protein resides in the endoplasmic reticulum membrane. It localises to the golgi apparatus membrane. In terms of biological role, required for the post-translational delivery of tail-anchored (TA) proteins to the endoplasmic reticulum. Together with GET2, acts as a membrane receptor for soluble GET3, which recognizes and selectively binds the transmembrane domain of TA proteins in the cytosol. The GET complex cooperates with the HDEL receptor ERD2 to mediate the ATP-dependent retrieval of resident ER proteins that contain a C-terminal H-D-E-L retention signal from the Golgi to the ER. This is Golgi to ER traffic protein 1 from Clavispora lusitaniae (strain ATCC 42720) (Yeast).